We begin with the raw amino-acid sequence, 520 residues long: Nonsense-mediated mRNA decay factor SMG9 (520 aa).

Residues 1 to 143 form a disordered region; it reads MSESGHSQPG…KGEKEGQRPT (143 aa). An N-acetylserine modification is found at Ser2. Phosphoserine is present on residues Ser2, Ser4, Ser7, Ser32, and Ser53. Positions 36–53 are enriched in basic and acidic residues; sequence GRERDYIAPWERERRDGS. Positions 78-94 are enriched in pro residues; sequence QPPPPAAPAAPPAPAPL. The segment covering 109–121 has biased composition (low complexity); it reads GPAATTSTSTPEG. Positions 122-133 are enriched in pro residues; the sequence is TAPPPPAAPVPP. At Ser451 the chain carries Phosphoserine.

Belongs to the SMG9 family. As to quaternary structure, self-associates to form homodimers and forms heterodimers with SMG8; these assembly forms may represent SMG1C intermediate forms. Component of the SMG1C complex composed of SMG1, SMG8 and SMG9. Self-associates to form homodimers and forms heterodimers with SMG8; these assembly forms may represent SMG1C intermediate forms. Interacts with DHX34; the interaction is RNA-independent. Post-translationally, phosphorylated by SMG1.

Functionally, involved in nonsense-mediated decay (NMD) of mRNAs containing premature stop codons. Is recruited by release factors to stalled ribosomes together with SMG1 and SMG8 (forming the SMG1C protein kinase complex) and, in the SMG1C complex, is required for the efficient association between SMG1 and SMG8. Plays a role in brain, heart, and eye development. The chain is Nonsense-mediated mRNA decay factor SMG9 from Bos taurus (Bovine).